The following is a 143-amino-acid chain: Transcriptional regulator MraZ (143 aa).

SpoVT-AbrB domains lie at 5–47 (SHAP…PMAE) and 76–119 (AADD…DAQR).

This sequence belongs to the MraZ family. As to quaternary structure, forms oligomers.

Its subcellular location is the cytoplasm. It localises to the nucleoid. This Frankia casuarinae (strain DSM 45818 / CECT 9043 / HFP020203 / CcI3) protein is Transcriptional regulator MraZ.